Here is a 42-residue protein sequence, read N- to C-terminus: Packaging protein P20 (42 aa).

A helical transmembrane segment spans residues isoleucine 11–cysteine 31.

As to quaternary structure, heterodimer of P20 and P22; further multimerizes as hexamers of heterodimers. Part of the dodecameric portal complex that is composed of the packaging efficiency factor P6, the DNA packaging ATPase P9, and the internal heterododecamer P20/P22 which spans the virion inner membrane.

Its subcellular location is the virion membrane. Its function is as follows. Together with P22, forms the internal part of the portal complex embeded in the virion internal membrane and which plays critical roles in genome packaging and genome ejection. Both proteins multimerize as a single ring-shaped heterdodecamer arranged around a central channel and interact with the P6/P9 external part of the portal. The polypeptide is Packaging protein P20 (XX) (Acinetobacter calcoaceticus (Arthrobacter siderocapsulatus)).